Reading from the N-terminus, the 530-residue chain is Autoinducer-2 kinase (530 aa).

It belongs to the FGGY kinase family.

It localises to the cytoplasm. The enzyme catalyses (S)-4,5-dihydroxypentane-2,3-dione + ATP = (2S)-2-hydroxy-3,4-dioxopentyl phosphate + ADP + H(+). Catalyzes the phosphorylation of autoinducer-2 (AI-2) to phospho-AI-2, which subsequently inactivates the transcriptional regulator LsrR and leads to the transcription of the lsr operon. Phosphorylates the ring-open form of (S)-4,5-dihydroxypentane-2,3-dione (DPD), which is the precursor to all AI-2 signaling molecules, at the C5 position. In Photorhabdus laumondii subsp. laumondii (strain DSM 15139 / CIP 105565 / TT01) (Photorhabdus luminescens subsp. laumondii), this protein is Autoinducer-2 kinase.